Reading from the N-terminus, the 147-residue chain is Large ribosomal subunit protein bL9 (147 aa).

Belongs to the bacterial ribosomal protein bL9 family.

Its function is as follows. Binds to the 23S rRNA. The chain is Large ribosomal subunit protein bL9 from Helicobacter hepaticus (strain ATCC 51449 / 3B1).